The chain runs to 736 residues: Segment polarity protein dishevelled homolog DVL-2 (736 aa).

A DIX domain is found at 1 to 82 (MAETKVIYHL…RVVSWLASSE (82 aa)). The disordered stretch occupies residues 79 to 241 (ASSEGSQPDS…PRLERTSSFS (163 aa)). Positions 100-114 (EPPPPVPPPIPPPPA) are enriched in pro residues. Residues 149-160 (MRRDRVRRRESS) are compositionally biased toward basic and acidic residues. Low complexity predominate over residues 181-195 (ESSSTLLTSEIETSI). Polar residues predominate over residues 205-217 (SRFSSSTEQSSAS). The span at 219 to 231 (LLKRHRRRRKQRP) shows a compositional bias: basic residues. Positions 254–326 (TVTLNMEKYN…NDDAVRVLRD (73 aa)) constitute a PDZ domain. Residues 327 to 427 (IVHKPGPIVL…LASVVKVMAS (101 aa)) form an interaction with custos region. Positions 428–502 (PESGLEVRDR…SEQCYYIFGD (75 aa)) constitute a DEP domain. 2 stretches are compositionally biased toward low complexity: residues 574–593 (MGSAGSQHSEGSRSSGSNRS) and 616–629 (KSGSGSESEYSTRS). The interval 574-664 (MGSAGSQHSE…HPPSVHSYAA (91 aa)) is disordered.

This sequence belongs to the DSH family. Can form homomultimers. Interacts with prickle1. Interacts (via PDZ domain) with ccdc88c/dal and dact1-B/dpr. Interacts (via DIX domain) with ARP/Axin-related protein and dact1-A/frodo. Interacts with sdc4, possibly via fz7. Interacts directly (via DEP domain) with efnb1/ephrin-B1 and indirectly with the phosphorylated ephrin receptors ephb1 and ephb2, via association with SH domain-containing adapters. May interact with lrrc6. Interacts with custos (via NLS1 and NLS2); the interaction is negatively regulated by Wnt stimulation. Post-translationally, phosphorylated. Phosphorylation is controlled by frizzled proteins, correlates with the onset of embryo dorsalizing events and is higher in the dorsal half of early cleavage embryos. Phosphorylated on tyrosine residues in response to association with efnb1/ephrin-B1. In terms of tissue distribution, expressed equally in both animal-vegetal and dorsal-ventral directions of the early blastula. Becomes enriched on the dorsal side of the embryo after cortical rotation. Expressed along the anterior margin of eye field of neurulae (stage 16 embryos) and in the anterolateral crescent that borders the eye field. Continues to be expressed in the optic cup at stage 26. Expressed in the central nervous system throughout the early tailbud stage including the entire hindbrain.

It is found in the cytoplasm. The protein resides in the cytoplasmic vesicle. It localises to the cell projection. Its subcellular location is the cilium. The protein localises to the nucleus. It is found in the cell membrane. Involved in at least 2 independent signaling cascades, controlling cell fate via canonical Wnt signaling and cell polarity via a planar cell polarity (PCP) cascade. Acts synergistically with dal/dapple-like to activate Wnt signaling, stabilizing ctnnb1/beta-catenin and leading to dorsal axis formation. Also prevents degradation of ctnnb1/beta-catenin by displacing gsk3 from a complex with ARP/Axin-related protein. Has an additional role in anterior-posterior (A/P) axis formation, specifying different neuroectodermal cell fates along the A/P axis in a dose-dependent manner by activating several early patterning genes. In the PCP pathway, required at the cell membrane for PCP-mediated neural and mesodermal convergent extension during gastrulation and subsequent neural tube closure, acting to activate jnk. Also involved in blastopore closure and archenteron elongation during early, but not late, gastrulation. Associates with ephrin receptors and ligands and acts as part of a downstream PCP pathway to mediate ephrin-mediated cell repulsion via activation of rhoa. Required for efnb1/ephrin-B1-driven movement of non-retinal progenitor cells into the retina during eye field formation. Patterns the hindbrain. Required for ciliogenesis. Controls the docking of basal bodies to the apical plasma membrane; mediates the activation, but not localization of rhoa at the apical surface of ciliated cells during basal body docking. Furthermore, required for the association of basal bodies with membrane-bound vesicles and the vesicle-trafficking protein exoc4/sec8, and this association is in turn required for basal body docking. Once basal bodies are docked, required for the planar polarization of basal bodies that underlies ciliary beating and the directional fluid flow across ciliated epithelia. This is Segment polarity protein dishevelled homolog DVL-2 (dvl2) from Xenopus laevis (African clawed frog).